The chain runs to 279 residues: Undecaprenyl-diphosphatase (279 aa).

The next 8 helical transmembrane spans lie at 2–22 (LFIE…TEWL), 44–64 (AFME…VIVI), 85–105 (WQLW…AVPL), 113–133 (FNHM…FLWI), 163–183 (VLSI…AIIL), 188–208 (TVAA…YSGL), 225–245 (LLVL…VIKL), and 255–275 (FTVF…YSVF).

Belongs to the UppP family.

Its subcellular location is the cell membrane. The enzyme catalyses di-trans,octa-cis-undecaprenyl diphosphate + H2O = di-trans,octa-cis-undecaprenyl phosphate + phosphate + H(+). Its function is as follows. Catalyzes the dephosphorylation of undecaprenyl diphosphate (UPP). Confers resistance to bacitracin. The polypeptide is Undecaprenyl-diphosphatase (Streptococcus equi subsp. zooepidemicus (strain H70)).